Reading from the N-terminus, the 297-residue chain is Acetylglutamate kinase (297 aa).

Substrate-binding positions include 68-69, Arg90, and Asn195; that span reads GG.

The protein belongs to the acetylglutamate kinase family. ArgB subfamily.

Its subcellular location is the cytoplasm. It carries out the reaction N-acetyl-L-glutamate + ATP = N-acetyl-L-glutamyl 5-phosphate + ADP. The protein operates within amino-acid biosynthesis; L-arginine biosynthesis; N(2)-acetyl-L-ornithine from L-glutamate: step 2/4. In terms of biological role, catalyzes the ATP-dependent phosphorylation of N-acetyl-L-glutamate. This chain is Acetylglutamate kinase, found in Mesorhizobium japonicum (strain LMG 29417 / CECT 9101 / MAFF 303099) (Mesorhizobium loti (strain MAFF 303099)).